Consider the following 290-residue polypeptide: Cilia- and flagella-associated protein 298-A (290 aa).

The protein belongs to the CFAP298 family.

The protein localises to the cytoplasm. It localises to the cytoskeleton. Its subcellular location is the cilium basal body. Functionally, plays a role in motile cilium function, possibly by acting on outer dynein arm assembly. Seems to be important for initiation rather than maintenance of cilium motility. Required for correct positioning of the cilium at the apical cell surface, suggesting an additional role in the planar cell polarity (PCP) pathway. May suppress canonical Wnt signaling activity. The chain is Cilia- and flagella-associated protein 298-A (cfap298-a) from Xenopus laevis (African clawed frog).